Consider the following 730-residue polypeptide: 1,4-alpha-glucan branching enzyme GlgB (730 aa).

Asp405 (nucleophile) is an active-site residue. Glu458 acts as the Proton donor in catalysis.

The protein belongs to the glycosyl hydrolase 13 family. GlgB subfamily. Monomer.

It carries out the reaction Transfers a segment of a (1-&gt;4)-alpha-D-glucan chain to a primary hydroxy group in a similar glucan chain.. It functions in the pathway glycan biosynthesis; glycogen biosynthesis. Catalyzes the formation of the alpha-1,6-glucosidic linkages in glycogen by scission of a 1,4-alpha-linked oligosaccharide from growing alpha-1,4-glucan chains and the subsequent attachment of the oligosaccharide to the alpha-1,6 position. The protein is 1,4-alpha-glucan branching enzyme GlgB of Haemophilus influenzae (strain PittGG).